Reading from the N-terminus, the 416-residue chain is Gamma-glutamyl phosphate reductase (416 aa).

Belongs to the gamma-glutamyl phosphate reductase family.

The protein localises to the cytoplasm. It carries out the reaction L-glutamate 5-semialdehyde + phosphate + NADP(+) = L-glutamyl 5-phosphate + NADPH + H(+). The protein operates within amino-acid biosynthesis; L-proline biosynthesis; L-glutamate 5-semialdehyde from L-glutamate: step 2/2. Its function is as follows. Catalyzes the NADPH-dependent reduction of L-glutamate 5-phosphate into L-glutamate 5-semialdehyde and phosphate. The product spontaneously undergoes cyclization to form 1-pyrroline-5-carboxylate. This is Gamma-glutamyl phosphate reductase from Vibrio cholerae serotype O1 (strain ATCC 39541 / Classical Ogawa 395 / O395).